Here is a 304-residue protein sequence, read N- to C-terminus: Endonuclease III-like protein 1 (304 aa).

The N-terminal 22 residues, 1 to 22 (MTALSARMLTRSRSLGPGAGPR), are a transit peptide targeting the mitochondrion. The segment at 1–72 (MTALSARMLT…SDSEKGEGAE (72 aa)) is disordered. The segment covering 23-42 (GCREEPGPLRRREAAAEARK) has biased composition (basic and acidic residues). Positions 28–52 (PGPLRRREAAAEARKSHSPVKRPRK) match the Bipartite nuclear localization signal motif. The segment covering 43–55 (SHSPVKRPRKAQR) has biased composition (basic residues). Ser63 and Ser65 each carry phosphoserine. Residues 191-215 (HYGGDIPASVAELVALPGVGPKMAH) form the HhH domain. Lys212 acts as the Nucleophile; for N-glycosylase activity in catalysis. [4Fe-4S] cluster contacts are provided by Cys282, Cys289, Cys292, and Cys298.

This sequence belongs to the Nth/MutY family. Interacts with YBX1. Interacts with ERCC5/XPG; the interaction stimulates NTHL1 activity and NTHL1 binding to its DNA substrate. The cofactor is [4Fe-4S] cluster. Post-translationally, ubiquitinated by TRIM26; leading to proteasomal degradation. In terms of tissue distribution, widely expressed with highest levels in heart and lowest levels in lung and liver.

It is found in the nucleus. It localises to the mitochondrion. The catalysed reaction is 2'-deoxyribonucleotide-(2'-deoxyribose 5'-phosphate)-2'-deoxyribonucleotide-DNA = a 3'-end 2'-deoxyribonucleotide-(2,3-dehydro-2,3-deoxyribose 5'-phosphate)-DNA + a 5'-end 5'-phospho-2'-deoxyribonucleoside-DNA + H(+). APE1 displaces NTHL1 from the N-glycosylase-generated AP site in DNA, thereby increasing the turnover of the DNA N-glycosylase activity. AP lyase activity is stimulated by YBX1. ERCC5/XPG stimulates NTHL1 activity and NTHL1 binding to its DNA substrate. Bifunctional DNA N-glycosylase with associated apurinic/apyrimidinic (AP) lyase function that catalyzes the first step in base excision repair (BER), the primary repair pathway for the repair of oxidative DNA damage. The DNA N-glycosylase activity releases the damaged DNA base from DNA by cleaving the N-glycosidic bond, leaving an AP site. The AP-lyase activity cleaves the phosphodiester bond 3' to the AP site by a beta-elimination. Primarily recognizes and repairs oxidative base damage of pyrimidines. Also has 8-oxo-7,8-dihydroguanine (8-oxoG) DNA glycosylase activity. Acts preferentially on DNA damage opposite guanine residues in DNA. Is able to process lesions in nucleosomes without requiring or inducing nucleosome disruption. This is Endonuclease III-like protein 1 from Homo sapiens (Human).